A 389-amino-acid polypeptide reads, in one-letter code: Na(+)/H(+) antiporter NhaA (389 aa).

11 consecutive transmembrane segments (helical) span residues 17 to 37 (ILLLVAVVLAMLMANSPLAGL), 59 to 79 (LLLWINDGLMALFFLLIGLEV), 95 to 115 (SLPTFAAIGGMLVPAGIYLLF), 124 to 144 (VGWAIPAATDIAFALGIMALL), 154 to 174 (VFLLALAIIDDLGVIVIIALF), 177 to 197 (SDLSTISLIIASIAIVGLVAL), 213 to 233 (LVLWVAVLKSGVHATLAGVII), 261 to 281 (FLILPVFAFANAGVALGNMSL), 287 to 307 (PVPVGIALGLMLGKPIGVMLF), 328 to 348 (IAPVAAMCGIGFTMSMFIASL), and 363 to 383 (LGTLIGSILAALIGYFWLSKV).

This sequence belongs to the NhaA Na(+)/H(+) (TC 2.A.33) antiporter family.

It localises to the cell inner membrane. The catalysed reaction is Na(+)(in) + 2 H(+)(out) = Na(+)(out) + 2 H(+)(in). In terms of biological role, na(+)/H(+) antiporter that extrudes sodium in exchange for external protons. The protein is Na(+)/H(+) antiporter NhaA of Shewanella sp. (strain ANA-3).